The following is a 307-amino-acid chain: Cytochrome c1 2, heme protein, mitochondrial (307 aa).

The transit peptide at 1–64 directs the protein to the mitochondrion; it reads MVGGGVIRQL…LLSFSTVASA (64 aa). The Mitochondrial intermembrane portion of the chain corresponds to 65 to 270; that stretch reads DEAEHGLECP…EPEMEERKLM (206 aa). One can recognise a Cytochrome c domain in the interval 90–197; that stretch reads ASIRRGHQVY…NGQNYVFALL (108 aa). 4 residues coordinate heme c: cysteine 103, cysteine 106, histidine 107, and methionine 226. The chain crosses the membrane as a helical span at residues 271 to 288; that stretch reads GFKWIFLLSLALLQAAYY. The Mitochondrial matrix segment spans residues 289–307; it reads RRLKWSVLKSRKLVLDVVN.

This sequence belongs to the cytochrome c family. Component of the ubiquinol-cytochrome c oxidoreductase (cytochrome b-c1 complex, complex III, CIII), a multisubunit enzyme composed of 10 subunits. The complex is composed of 3 respiratory subunits cytochrome b (MT-CYB), cytochrome c1 (CYC1-1 or CYC1-2) and Rieske protein (UCR1-1 or UCR1-2), 2 core protein subunits MPPalpha1 (or MPPalpha2) and MPPB, and 5 low-molecular weight protein subunits QCR7-1 (or QCR7-2), UCRQ-1 (or UCRQ-2), QCR9, UCRY and probably QCR6-1 (or QCR6-2). The complex exists as an obligatory dimer and forms supercomplexes (SCs) in the inner mitochondrial membrane with NADH-ubiquinone oxidoreductase (complex I, CI), resulting in different assemblies (supercomplexes SCI(1)III(2) and SCI(2)III(4)). Post-translationally, binds 1 heme c group covalently per subunit.

The protein localises to the mitochondrion inner membrane. Functionally, component of the ubiquinol-cytochrome c oxidoreductase, a multisubunit transmembrane complex that is part of the mitochondrial electron transport chain which drives oxidative phosphorylation. The respiratory chain contains 3 multisubunit complexes succinate dehydrogenase (complex II, CII), ubiquinol-cytochrome c oxidoreductase (cytochrome b-c1 complex, complex III, CIII) and cytochrome c oxidase (complex IV, CIV), that cooperate to transfer electrons derived from NADH and succinate to molecular oxygen, creating an electrochemical gradient over the inner membrane that drives transmembrane transport and the ATP synthase. The cytochrome b-c1 complex catalyzes electron transfer from ubiquinol to cytochrome c, linking this redox reaction to translocation of protons across the mitochondrial inner membrane, with protons being carried across the membrane as hydrogens on the quinol. In the process called Q cycle, 2 protons are consumed from the matrix, 4 protons are released into the intermembrane space and 2 electrons are passed to cytochrome c. Cytochrome c1 is a catalytic core subunit containing a c-type heme. It transfers electrons from the [2Fe-2S] iron-sulfur cluster of the Rieske protein to cytochrome c. The chain is Cytochrome c1 2, heme protein, mitochondrial (CYC1-2) from Arabidopsis thaliana (Mouse-ear cress).